Consider the following 531-residue polypeptide: SWI/SNF-related matrix-associated actin-dependent regulator of chromatin subfamily D member 2 (531 aa).

A disordered region spans residues 20 to 85 (AVAAALGAPP…MSPGSRMPMA (66 aa)). Residues 34–45 (PGMLPSPALRGP) are compositionally biased toward low complexity. Asymmetric dimethylarginine is present on residues Arg-81 and Arg-104. Ser-203 is subject to Phosphoserine. Positions 205–226 (SKADGDNAGTAGTPGGTPAADK) are disordered. Residues 210 to 225 (DNAGTAGTPGGTPAAD) are compositionally biased toward low complexity. A Phosphothreonine modification is found at Thr-217. Lys-226 is covalently cross-linked (Glycyl lysine isopeptide (Lys-Gly) (interchain with G-Cter in SUMO2)). In terms of domain architecture, SWIB/MDM2 spans 306–383 (HQPPQYKLDP…PMKLAGLLQH (78 aa)).

The protein belongs to the SMARCD family. In terms of assembly, component of the multiprotein chromatin-remodeling complexes SWI/SNF: SWI/SNF-A (BAF), SWI/SNF-B (PBAF) and related complexes. The canonical complex contains a catalytic subunit (either SMARCA4/BRG1/BAF190A or SMARCA2/BRM/BAF190B), and at least SMARCE1, ACTL6A/BAF53, SMARCC1/BAF155, SMARCC2/BAF170, and SMARCB1/SNF5/BAF47. Other subunits specific to each of the complexes may also be present permitting several possible combinations developmentally and tissue specific. Component of the BAF complex, which includes at least actin (ACTB), ARID1A/BAF250A, ARID1B/BAF250B, SMARCA2/BRM, SMARCA4/BRG1, ACTL6A/BAF53, ACTL6B/BAF53B, SMARCE1/BAF57, SMARCC1/BAF155, SMARCC2/BAF170, SMARCB1/SNF5/INI1, and one or more SMARCD1/BAF60A, SMARCD2/BAF60B, or SMARCD3/BAF60C. In muscle cells, the BAF complex also contains DPF3. Component of the SWI/SNF-B (PBAF) chromatin remodeling complex, at least composed of SMARCA4/BRG1, SMARCB1/BAF47/SNF5, ACTL6A/BAF53A or ACTL6B/BAF53B, SMARCE1/BAF57, SMARCD1/BAF60A, SMARCD2/BAF60B, perhaps SMARCD3/BAF60C, SMARCC1/BAF155, SMARCC2/BAF170, PBRM1/BAF180, ARID2/BAF200 and actin (ACTB). Interacts with UNKL. Interacts with CEBPE. In terms of processing, ubiquitinated through a signaling process involving RAC1 and the RING finger protein UNKL.

It localises to the nucleus. Functionally, involved in transcriptional activation and repression of select genes by chromatin remodeling (alteration of DNA-nucleosome topology). Component of SWI/SNF chromatin remodeling complexes that carry out key enzymatic activities, changing chromatin structure by altering DNA-histone contacts within a nucleosome in an ATP-dependent manner. Critical regulator of myeloid differentiation, controlling granulocytopoiesis and the expression of genes involved in neutrophil granule formation. The sequence is that of SWI/SNF-related matrix-associated actin-dependent regulator of chromatin subfamily D member 2 (Smarcd2) from Mus musculus (Mouse).